A 411-amino-acid chain; its full sequence is G2/mitotic-specific cyclin cig2 (411 aa).

The Destruction box motif lies at 51–60; that stretch reads RTVLSDVSNV. Positions 57-89 are disordered; sequence VSNVGKNNADEKDTKKAKRSFDESNLSTNEEAD. A compositionally biased stretch (basic and acidic residues) spans 64 to 78; it reads NADEKDTKKAKRSFD. The region spanning 139–265 is the Cyclin N-terminal domain; that stretch reads EIFEYIRKLD…MLNVLNFDLS (127 aa). An interaction with pop1 region spans residues 181–273; the sequence is SNFCLMPETL…LSYPSPLNFL (93 aa).

This sequence belongs to the cyclin family. Cyclin AB subfamily. As to quaternary structure, associates with cdc2, res2 and rum1. Interacts with pop1 only when phosphorylated. In terms of processing, phosphorylated.

It is found in the nucleus. The protein resides in the cytoplasm. The protein localises to the cytoskeleton. It localises to the microtubule organizing center. Its subcellular location is the spindle pole body. Functionally, essential for the control of the cell cycle at the G2/M and G1/S (mitosis) transition. Interacts with the cdc2 protein kinase to form MPF. Interaction with res2 promotes the phosphorylation of res1 and inhibits MBF-dependent gene transcription. Forms an autoregulating feedback-inhibition loop with MBF which is important for normal regulation of the cell cycle. G2/M cyclins accumulate steadily during G2 and are abruptly destroyed at mitosis. Negatively regulates conjugation via interacting with cell cycle 'start' genes. Degraded by skp1, pop1 and pop2 in the G2 and M phases of the cell cycle. This Schizosaccharomyces pombe (strain 972 / ATCC 24843) (Fission yeast) protein is G2/mitotic-specific cyclin cig2 (cig2).